Reading from the N-terminus, the 85-residue chain is Antitoxin VapB4 (85 aa).

The protein belongs to the phD/YefM antitoxin family. Interacts with cognate toxin VapC4.

Its function is as follows. Antitoxin component of a type II toxin-antitoxin (TA) system. Antitoxin that counteracts the effect of the VapC4 toxin. The chain is Antitoxin VapB4 (vapB4) from Mycobacterium tuberculosis (strain CDC 1551 / Oshkosh).